A 375-amino-acid chain; its full sequence is Queuine tRNA-ribosyltransferase (375 aa).

The active-site Proton acceptor is the Asp90. Substrate is bound by residues 90–94, Asp144, Gln190, and Gly217; that span reads DSGGF. Residues 248 to 254 form an RNA binding region; it reads GIGTPHY. Asp267 acts as the Nucleophile in catalysis. The interval 272–276 is RNA binding; important for wobble base 34 recognition; sequence TRIAR. Residues Cys305, Cys307, Cys310, and His336 each coordinate Zn(2+).

This sequence belongs to the queuine tRNA-ribosyltransferase family. In terms of assembly, homodimer. Within each dimer, one monomer is responsible for RNA recognition and catalysis, while the other monomer binds to the replacement base PreQ1. Requires Zn(2+) as cofactor.

It carries out the reaction 7-aminomethyl-7-carbaguanine + guanosine(34) in tRNA = 7-aminomethyl-7-carbaguanosine(34) in tRNA + guanine. It participates in tRNA modification; tRNA-queuosine biosynthesis. Its function is as follows. Catalyzes the base-exchange of a guanine (G) residue with the queuine precursor 7-aminomethyl-7-deazaguanine (PreQ1) at position 34 (anticodon wobble position) in tRNAs with GU(N) anticodons (tRNA-Asp, -Asn, -His and -Tyr). Catalysis occurs through a double-displacement mechanism. The nucleophile active site attacks the C1' of nucleotide 34 to detach the guanine base from the RNA, forming a covalent enzyme-RNA intermediate. The proton acceptor active site deprotonates the incoming PreQ1, allowing a nucleophilic attack on the C1' of the ribose to form the product. After dissociation, two additional enzymatic reactions on the tRNA convert PreQ1 to queuine (Q), resulting in the hypermodified nucleoside queuosine (7-(((4,5-cis-dihydroxy-2-cyclopenten-1-yl)amino)methyl)-7-deazaguanosine). In Borrelia hermsii (strain HS1 / DAH), this protein is Queuine tRNA-ribosyltransferase.